The sequence spans 425 residues: Synaptotagmin-4 (425 aa).

Residues 1 to 16 (MAPITTSRVEFDEIPT) lie on the Vesicular side of the membrane. Residues 17 to 37 (VVGIFSAFGLVFTVSLFAWIC) traverse the membrane as a helical segment. Topologically, residues 38–425 (CQRRSAKSNK…IAKWHMLCDG (388 aa)) are cytoplasmic. 2 disordered regions span residues 102-121 (NGNF…LENV) and 126-147 (FPET…SLTS). The span at 105–119 (FPKTNPKAGSSSDLE) shows a compositional bias: polar residues. Residue S135 is modified to Phosphoserine; by MAPK8. The span at 137 to 146 (ESLKSSTSLT) shows a compositional bias: low complexity. 2 consecutive C2 domains span residues 153–274 (KLGT…MLMT) and 287–420 (GRGE…AKWH). 3 residues coordinate Ca(2+): D246, S249, and D252.

The protein belongs to the synaptotagmin family. In terms of assembly, interacts with KIF1A; the interaction increases in presence of calcium and decreases when SYT4 is phosphorylated at Ser-135. The cofactor is Ca(2+). Post-translationally, phosphorylation at Ser-135 by MAPK8/JNK1 reduces interaction with KIF1A and neuronal dense core vesicles mobility. As to expression, widely expressed. Expressed in the brain. Expressed in pituitary gland, cerebellum, cortex, hypothalamus and hippocampus.

It is found in the cytoplasmic vesicle. The protein localises to the secretory vesicle. It localises to the neuronal dense core vesicle membrane. In terms of biological role, synaptotagmin family member which does not bind Ca(2+). Involved in neuronal dense core vesicles (DCVs) mobility through its interaction with KIF1A. Upon increased neuronal activity, phosphorylation by MAPK8/JNK1 destabilizes the interaction with KIF1A and captures DCVs to synapses. Plays a role in dendrite formation by melanocytes. The polypeptide is Synaptotagmin-4 (Syt4) (Rattus norvegicus (Rat)).